The chain runs to 485 residues: Phosphoglucosamine mutase (485 aa).

Ser133 (phosphoserine intermediate) is an active-site residue. 4 residues coordinate Mg(2+): Ser133, Asp274, Asp276, and Asp278. Position 133 is a phosphoserine (Ser133).

This sequence belongs to the phosphohexose mutase family. It depends on Mg(2+) as a cofactor. Activated by phosphorylation.

It carries out the reaction alpha-D-glucosamine 1-phosphate = D-glucosamine 6-phosphate. Its function is as follows. Catalyzes the conversion of glucosamine-6-phosphate to glucosamine-1-phosphate. The sequence is that of Phosphoglucosamine mutase from Crocosphaera subtropica (strain ATCC 51142 / BH68) (Cyanothece sp. (strain ATCC 51142)).